The chain runs to 193 residues: ATP-dependent Clp protease proteolytic subunit 1 (193 aa).

The active-site Nucleophile is the Ser98. His123 is an active-site residue.

It belongs to the peptidase S14 family. As to quaternary structure, fourteen ClpP subunits assemble into 2 heptameric rings which stack back to back to give a disk-like structure with a central cavity, resembling the structure of eukaryotic proteasomes.

It is found in the cytoplasm. It carries out the reaction Hydrolysis of proteins to small peptides in the presence of ATP and magnesium. alpha-casein is the usual test substrate. In the absence of ATP, only oligopeptides shorter than five residues are hydrolyzed (such as succinyl-Leu-Tyr-|-NHMec, and Leu-Tyr-Leu-|-Tyr-Trp, in which cleavage of the -Tyr-|-Leu- and -Tyr-|-Trp bonds also occurs).. Its function is as follows. Cleaves peptides in various proteins in a process that requires ATP hydrolysis. Has a chymotrypsin-like activity. Plays a major role in the degradation of misfolded proteins. This chain is ATP-dependent Clp protease proteolytic subunit 1, found in Bacillus anthracis.